The following is a 230-amino-acid chain: Urease accessory protein UreG (230 aa).

Residue 33 to 40 (GPVGSGKT) coordinates GTP.

This sequence belongs to the SIMIBI class G3E GTPase family. UreG subfamily. In terms of assembly, homodimer. UreD, UreF and UreG form a complex that acts as a GTP-hydrolysis-dependent molecular chaperone, activating the urease apoprotein by helping to assemble the nickel containing metallocenter of UreC. The UreE protein probably delivers the nickel.

The protein resides in the cytoplasm. Facilitates the functional incorporation of the urease nickel metallocenter. This process requires GTP hydrolysis, probably effectuated by UreG. The protein is Urease accessory protein UreG of Mycobacteroides abscessus (strain ATCC 19977 / DSM 44196 / CCUG 20993 / CIP 104536 / JCM 13569 / NCTC 13031 / TMC 1543 / L948) (Mycobacterium abscessus).